Consider the following 310-residue polypeptide: Membrane protein insertase YidC 2 (310 aa).

The first 23 residues, 1-23 (MKKTLKRILFSSLSLSILLLLTG), serve as a signal peptide directing secretion. Residue cysteine 24 is the site of N-palmitoyl cysteine attachment. Cysteine 24 carries the S-diacylglycerol cysteine lipid modification. The next 5 membrane-spanning stretches (helical) occupy residues 33 to 53 (PYGVIWNTLGVPMANLITYFA), 58 to 78 (LGFGVAIIIVTIIVRVIILPL), 135 to 155 (FGGIGCLPLLIQMPFFSAIFF), 180 to 200 (LTVIIAILYFVQSWLSMQGVP), and 219 to 239 (VFMSISLPASVALYWFIGGIF). A disordered region spans residues 262–310 (EYTKNPPKAYKSNNARKDVTSSTKTTESNQAIITSKKTNRNAGKQKRRG). Positions 281 to 297 (TSSTKTTESNQAIITSK) are enriched in polar residues. Positions 298-310 (KTNRNAGKQKRRG) are enriched in basic residues.

Belongs to the OXA1/ALB3/YidC family. Type 2 subfamily.

It localises to the cell membrane. Required for the insertion and/or proper folding and/or complex formation of integral membrane proteins into the membrane. Involved in integration of membrane proteins that insert both dependently and independently of the Sec translocase complex, as well as at least some lipoproteins. This chain is Membrane protein insertase YidC 2, found in Streptococcus agalactiae serotype III (strain NEM316).